The primary structure comprises 236 residues: Small ribosomal subunit protein uS3 (236 aa).

Residues 38 to 106 (LRRYLHTRLK…DIQINISEIK (69 aa)) form the KH type-2 domain. The segment at 211–236 (DLSPNVQAQQRKMKESPQQRRQRRGG) is disordered.

It belongs to the universal ribosomal protein uS3 family. Part of the 30S ribosomal subunit. Forms a tight complex with proteins S10 and S14.

Binds the lower part of the 30S subunit head. Binds mRNA in the 70S ribosome, positioning it for translation. The chain is Small ribosomal subunit protein uS3 from Salinibacter ruber (strain DSM 13855 / M31).